Reading from the N-terminus, the 318-residue chain is Putative HTH-type transcriptional regulatory protein TK0539 (318 aa).

The HTH cro/C1-type domain occupies 131–189 (LRELREKHGYSVNELAQLLGVSRKSLLNYERGEQAVSLDVAIQLEEIFDEALAEPIDIL). Positions 142–161 (VNELAQLLGVSRKSLLNYER) form a DNA-binding region, H-T-H motif.

The polypeptide is Putative HTH-type transcriptional regulatory protein TK0539 (Thermococcus kodakarensis (strain ATCC BAA-918 / JCM 12380 / KOD1) (Pyrococcus kodakaraensis (strain KOD1))).